Consider the following 461-residue polypeptide: MSATPPIAPIATPKVGFVSLGCPKALVDSEQIITQLRAEGYEISGTYDGADLVVVNTCGFIDEAVQESLDAIGEALNENGKVIVTGCLGAKKSASGSGLIEEVHPKVLAVTGPHALGEVMQHVHMHLPKPHDPFVDLVPAAGVKLTPRHYAYLKISEGCNHRCTFCIIPSMRGDLVSRPVADVMLEAENLFKSGVKELLVISQDTSAYGVDVKYRTGFWNGKPIKTRMTDLVGALGELAAQYGAWVRLHYVYPYPSVDEVIPMMAEGPFKGHVLPYLDVPFQHAHPEVLKRMKRPANAEKVMERVKKWREMCPDLTIRSTFIAGFPGETEEQFQTLLDFIREAELDRVGCFAYSPVEGATANELDGALPDEVREERRARFMEVAEEVSAKRIAKKVGKTLKVLVDEINADGGIGRTAADAPEIDGVVYIAPAVKASKRYKVGDFVSVKITGADGHDLWGEV.

In terms of domain architecture, MTTase N-terminal spans 13 to 128; that stretch reads PKVGFVSLGC…VMQHVHMHLP (116 aa). Cysteine 22, cysteine 58, cysteine 87, cysteine 159, cysteine 163, and cysteine 166 together coordinate [4Fe-4S] cluster. One can recognise a Radical SAM core domain in the interval 145–390; that stretch reads LTPRHYAYLK…MEVAEEVSAK (246 aa). A TRAM domain is found at 393–461; that stretch reads AKKVGKTLKV…ADGHDLWGEV (69 aa).

The protein belongs to the methylthiotransferase family. RimO subfamily. [4Fe-4S] cluster is required as a cofactor.

The protein localises to the cytoplasm. It catalyses the reaction L-aspartate(89)-[ribosomal protein uS12]-hydrogen + (sulfur carrier)-SH + AH2 + 2 S-adenosyl-L-methionine = 3-methylsulfanyl-L-aspartate(89)-[ribosomal protein uS12]-hydrogen + (sulfur carrier)-H + 5'-deoxyadenosine + L-methionine + A + S-adenosyl-L-homocysteine + 2 H(+). Catalyzes the methylthiolation of an aspartic acid residue of ribosomal protein uS12. The protein is Ribosomal protein uS12 methylthiotransferase RimO of Paraburkholderia xenovorans (strain LB400).